The following is a 266-amino-acid chain: MALPTFTMRQLVEAGVHFGHNTRRWNPKMASYLFGIRNGIHIIDLQQSVPMLHRAMQAVRDVTAGGGRVLFVGTKHQASDVVAESAKRCGQYFVNHRWLGGMLTNWKTISNSIRRLRELDEQLASGALAGLTKKEQLVLSREKEKLDRALGGIKDMGGLPDILFIIDTNKEALAVQEANKLGIPVVAIIDSNCDPAGITYPIPGNDDAIRAIQTYCDLMSGAVLDGIQAEITRGGGDVGAAAEAPVEQIPEVVAEAAAEEAAAPQA.

It belongs to the universal ribosomal protein uS2 family.

This chain is Small ribosomal subunit protein uS2, found in Paramagnetospirillum magneticum (strain ATCC 700264 / AMB-1) (Magnetospirillum magneticum).